A 298-amino-acid chain; its full sequence is Lipoyl synthase (298 aa).

Cysteine 40, cysteine 45, cysteine 51, cysteine 67, cysteine 71, cysteine 74, and serine 280 together coordinate [4Fe-4S] cluster. One can recognise a Radical SAM core domain in the interval 53–269; that stretch reads AVRKTATFMI…KEIALSKGFS (217 aa).

Belongs to the radical SAM superfamily. Lipoyl synthase family. The cofactor is [4Fe-4S] cluster.

The protein localises to the cytoplasm. It catalyses the reaction [[Fe-S] cluster scaffold protein carrying a second [4Fe-4S](2+) cluster] + N(6)-octanoyl-L-lysyl-[protein] + 2 oxidized [2Fe-2S]-[ferredoxin] + 2 S-adenosyl-L-methionine + 4 H(+) = [[Fe-S] cluster scaffold protein] + N(6)-[(R)-dihydrolipoyl]-L-lysyl-[protein] + 4 Fe(3+) + 2 hydrogen sulfide + 2 5'-deoxyadenosine + 2 L-methionine + 2 reduced [2Fe-2S]-[ferredoxin]. It functions in the pathway protein modification; protein lipoylation via endogenous pathway; protein N(6)-(lipoyl)lysine from octanoyl-[acyl-carrier-protein]. Its function is as follows. Catalyzes the radical-mediated insertion of two sulfur atoms into the C-6 and C-8 positions of the octanoyl moiety bound to the lipoyl domains of lipoate-dependent enzymes, thereby converting the octanoylated domains into lipoylated derivatives. This Bacillus mycoides (strain KBAB4) (Bacillus weihenstephanensis) protein is Lipoyl synthase.